The sequence spans 198 residues: Alpha1-proteinase inhibitor-degradation deficient protein 37 (198 aa).

Serine 79 is modified (phosphoserine).

It localises to the cytoplasm. Its function is as follows. Involved in ER-associated protein degradation (ERAD). The chain is Alpha1-proteinase inhibitor-degradation deficient protein 37 (ADD37) from Saccharomyces cerevisiae (strain ATCC 204508 / S288c) (Baker's yeast).